A 570-amino-acid chain; its full sequence is Vacuolar protein sorting-associated protein 45 (570 aa).

Phosphoserine is present on residues serine 307 and serine 441.

The protein belongs to the STXBP/unc-18/SEC1 family. As to quaternary structure, interacts with ZFYVE20. Interacts with STX6.

Its subcellular location is the golgi apparatus membrane. The protein localises to the endosome membrane. Its function is as follows. May play a role in vesicle-mediated protein trafficking from the Golgi stack through the trans-Golgi network. This chain is Vacuolar protein sorting-associated protein 45 (Vps45), found in Mus musculus (Mouse).